Here is a 191-residue protein sequence, read N- to C-terminus: Adenylate kinase (191 aa).

Residue 11–16 coordinates ATP; sequence GAGKGT. Residues 31–60 are NMP; the sequence is STGDILRSNVAERSPLGIKAKDYMDKGDLV. AMP contacts are provided by residues Thr32, Arg37, 58–60, 86–89, and Gln93; these read DLV and GFPR. The tract at residues 132 to 138 is LID; that stretch reads SRKREDD. Arg133 lines the ATP pocket. The AMP site is built by Arg135 and Arg146. Asn174 provides a ligand contact to ATP.

The protein belongs to the adenylate kinase family. As to quaternary structure, monomer.

The protein localises to the cytoplasm. The catalysed reaction is AMP + ATP = 2 ADP. It functions in the pathway purine metabolism; AMP biosynthesis via salvage pathway; AMP from ADP: step 1/1. Functionally, catalyzes the reversible transfer of the terminal phosphate group between ATP and AMP. Plays an important role in cellular energy homeostasis and in adenine nucleotide metabolism. This is Adenylate kinase from Trichodesmium erythraeum (strain IMS101).